Here is a 184-residue protein sequence, read N- to C-terminus: Large ribosomal subunit protein uL6 (184 aa).

Belongs to the universal ribosomal protein uL6 family. In terms of assembly, part of the 50S ribosomal subunit.

This protein binds to the 23S rRNA, and is important in its secondary structure. It is located near the subunit interface in the base of the L7/L12 stalk, and near the tRNA binding site of the peptidyltransferase center. This is Large ribosomal subunit protein uL6 from Thermotoga petrophila (strain ATCC BAA-488 / DSM 13995 / JCM 10881 / RKU-1).